Here is a 135-residue protein sequence, read N- to C-terminus: MRLFIIDTVATVIFFTAVATFSELLIAGMAPSEVLATRLLMVPVMVLTGRPYTRWRDWLVRRTAPRNRWSAFLTDILAFLSFQAPVYGATLLIAGASFAEAGTAIGSAIILMILLARPFGLFVEWTRSLFGVELS.

3 helical membrane passes run 9–29 (VATV…IAGM), 75–95 (DILA…LIAG), and 96–116 (ASFA…ILLA).

Belongs to the AlaE exporter family.

It localises to the cell inner membrane. Functionally, exports L-alanine. The protein is L-alanine exporter AlaE of Cereibacter sphaeroides (strain ATCC 17023 / DSM 158 / JCM 6121 / CCUG 31486 / LMG 2827 / NBRC 12203 / NCIMB 8253 / ATH 2.4.1.) (Rhodobacter sphaeroides).